A 349-amino-acid chain; its full sequence is Isopentenyl-diphosphate delta-isomerase (349 aa).

6-7 (RK) serves as a coordination point for substrate. FMN contacts are provided by residues 62–64 (AMT), Ser-93, and Asn-122. Gln-152 is a substrate binding site. Glu-153 is a Mg(2+) binding site. Residues Lys-184, Thr-214, 258–259 (GG), and 280–281 (AG) each bind FMN.

Belongs to the IPP isomerase type 2 family. In terms of assembly, homooctamer. Dimer of tetramers. It depends on FMN as a cofactor. Requires NADPH as cofactor. The cofactor is Mg(2+).

The protein localises to the cytoplasm. The enzyme catalyses isopentenyl diphosphate = dimethylallyl diphosphate. Functionally, involved in the biosynthesis of isoprenoids. Catalyzes the 1,3-allylic rearrangement of the homoallylic substrate isopentenyl (IPP) to its allylic isomer, dimethylallyl diphosphate (DMAPP). This chain is Isopentenyl-diphosphate delta-isomerase, found in Bacillus cereus (strain ATCC 10987 / NRS 248).